The primary structure comprises 313 residues: BTB/POZ domain-containing adapter for CUL3-mediated RhoA degradation protein 3 (313 aa).

M1 bears the N-acetylmethionine mark. At S23 the chain carries Phosphoserine. The region spanning 32 to 100 (KYVKLNVGGA…LRDGAVPLPE (69 aa)) is the BTB domain. The PCNA-binding motif lies at 239-245 (QTKVEFP).

It belongs to the BACURD family. Homotetramer; forms a two-fold symmetric tetramer in solution. Interacts with CUL3; interaction is direct and forms a 5:5 heterodecamer. Component of the BCR(BACURD3) E3 ubiquitin ligase complex, at least composed of CUL3, KCTD10/BACURD3 and RBX1. Interacts with DNA polymerase delta subunit 2/POLD2. Interacts with PCNA.

Its subcellular location is the nucleus. It participates in protein modification; protein ubiquitination. Its function is as follows. Substrate-specific adapter of a BCR (BTB-CUL3-RBX1) E3 ubiquitin-protein ligase complex. The BCR(BACURD3) E3 ubiquitin ligase complex mediates the ubiquitination of target proteins, leading to their degradation by the proteasome. The chain is BTB/POZ domain-containing adapter for CUL3-mediated RhoA degradation protein 3 (KCTD10) from Homo sapiens (Human).